Reading from the N-terminus, the 529-residue chain is Calcium-dependent protein kinase 3 (529 aa).

Residues 1-73 (MGHRHSKSKS…GRILGRPMEE (73 aa)) form a disordered region. Residue Gly2 is the site of N-myristoyl glycine attachment. Over residues 39-53 (SGSGTVGSSGSGTGG) the composition is skewed to gly residues. The 259-residue stretch at 78–336 (YEFGRELGRG…AAEVLNHPWI (259 aa)) folds into the Protein kinase domain. ATP-binding positions include 84-92 (LGRGQFGVT) and Lys107. Asp202 (proton acceptor) is an active-site residue. Ser242 bears the Phosphoserine mark. The tract at residues 342–372 (ASDKPLDNAVLSRMKQFRAMNKLKKMALKVI) is autoinhibitory domain. 4 EF-hand domains span residues 379 to 414 (EEIIGLKEMFKSLDTDNNGIVTLEELRTGLPKLGSK), 415 to 450 (ISEAEIRQLMEAADMDGDGSIDYLEFISATMHMNRI), 451 to 485 (EREDHLYTAFQFFDNDNSGYITMEELELAMKKYNM), and 486 to 521 (GDDKSIKEIIAEVDTDRDGKINYEEFVAMMKKGNPE). Ca(2+)-binding residues include Asp392, Asp394, Asn396, Glu403, Asp428, Asp430, Asp432, Ser434, Glu439, Asp464, Asp466, Ser468, Tyr470, Glu475, Asp499, Asp501, Asp503, Lys505, and Glu510.

The protein belongs to the protein kinase superfamily. Ser/Thr protein kinase family. CDPK subfamily. Interacts with GHR1. As to expression, expressed in both guard cells and mesophyll cells.

The protein localises to the cytoplasm. It localises to the nucleus. The enzyme catalyses L-seryl-[protein] + ATP = O-phospho-L-seryl-[protein] + ADP + H(+). It carries out the reaction L-threonyl-[protein] + ATP = O-phospho-L-threonyl-[protein] + ADP + H(+). Activated by calcium. Autophosphorylation may play an important role in the regulation of the kinase activity. In terms of biological role, may play a role in signal transduction pathways that involve calcium as a second messenger. Functions in abscisic acid (ABA) regulation of guard cell S-type anion- and Ca(2+)-permeable channels and stomatal closure. The sequence is that of Calcium-dependent protein kinase 3 from Arabidopsis thaliana (Mouse-ear cress).